A 220-amino-acid polypeptide reads, in one-letter code: Elongation factor Ts (220 aa).

Residues 83-86 (TDFV) form an involved in Mg(2+) ion dislocation from EF-Tu region.

This sequence belongs to the EF-Ts family.

The protein localises to the cytoplasm. Its function is as follows. Associates with the EF-Tu.GDP complex and induces the exchange of GDP to GTP. It remains bound to the aminoacyl-tRNA.EF-Tu.GTP complex up to the GTP hydrolysis stage on the ribosome. The sequence is that of Elongation factor Ts from Synechococcus sp. (strain CC9605).